Reading from the N-terminus, the 166-residue chain is Putative transmembrane protein ORF166 (166 aa).

The next 3 membrane-spanning stretches (helical) occupy residues 35–55 (IILV…FAGL), 60–80 (PICV…FVTA), and 124–144 (IFCL…AFIN).

It localises to the host membrane. This Acidianus convivator (ABV) protein is Putative transmembrane protein ORF166.